The following is a 120-amino-acid chain: Nitrogen regulatory protein GlnK1 (120 aa).

ADP is bound by residues T40, 48–50 (GEQ), V75, and 98–101 (GDGR). Residues T40, 48–50 (GEQ), V75, and 98–101 (GDGR) each bind ATP.

It belongs to the P(II) protein family. Homotrimer. Interacts and forms a complex with Amt1.

It is found in the cytoplasm. Its function is as follows. Involved in the regulation of nitrogen metabolism. Regulates the activity of its targets by protein-protein interaction in response to the nitrogen status of the cell. Regulates the activity of the ammonia channel Amt1 via direct interaction. The sequence is that of Nitrogen regulatory protein GlnK1 from Archaeoglobus fulgidus (strain ATCC 49558 / DSM 4304 / JCM 9628 / NBRC 100126 / VC-16).